Consider the following 86-residue polypeptide: Small ribosomal subunit protein uS17 (86 aa).

It belongs to the universal ribosomal protein uS17 family. As to quaternary structure, part of the 30S ribosomal subunit.

In terms of biological role, one of the primary rRNA binding proteins, it binds specifically to the 5'-end of 16S ribosomal RNA. The sequence is that of Small ribosomal subunit protein uS17 from Shouchella clausii (strain KSM-K16) (Alkalihalobacillus clausii).